Reading from the N-terminus, the 325-residue chain is Syntaxin-16 (325 aa).

The Cytoplasmic portion of the chain corresponds to Met1–Lys301. Ser41 carries the phosphoserine modification. The region spanning Thr230–Ala292 is the t-SNARE coiled-coil homology domain. Residues Met302–Val322 form a helical; Anchor for type IV membrane protein membrane-spanning segment. The Vesicular segment spans residues Lys323–Arg325.

The protein belongs to the syntaxin family. Interacts with GCC2. Interacts with BAIAP3; this interaction is increased in the presence of calcium. In terms of tissue distribution, ubiquitous.

It is found in the golgi apparatus membrane. It localises to the cytoplasm. In terms of biological role, SNARE involved in vesicular transport from the late endosomes to the trans-Golgi network. This is Syntaxin-16 (STX16) from Homo sapiens (Human).